We begin with the raw amino-acid sequence, 655 residues long: p-hydroxybenzoic acid efflux pump subunit AaeB (655 aa).

The Periplasmic segment spans residues 1 to 12 (MDIFSIANQHIR). Residues 13-33 (FAVKLATAIVLALFVGFHFQL) traverse the membrane as a helical segment. Residues 34–37 (ETPR) are Cytoplasmic-facing. The chain crosses the membrane as a helical span at residues 38 to 58 (WAVLTAAIVAAGPAFAAGGEP). The Periplasmic portion of the chain corresponds to 59-68 (YSGAIRYRGF). A helical transmembrane segment spans residues 69 to 89 (LRIIGTFIGCIAGLVIIIAMI). Residues 90–92 (RAP) are Cytoplasmic-facing. A helical transmembrane segment spans residues 93–113 (LLMILVCCIWAGFCTWISSLV). The Periplasmic segment spans residues 114–120 (RIENSYA). Residues 121-141 (WGLAGYTALIIVITIQPEPLL) traverse the membrane as a helical segment. At 142–151 (TPQFAVERCS) the chain is on the cytoplasmic side. Residues 152–172 (EIVIGIVCAIMADLLFSPRSI) form a helical membrane-spanning segment. Over 173 to 369 (KQEVDRELES…RTTLSCILGT (197 aa)) the chain is Periplasmic. A helical membrane pass occupies residues 370–390 (LFWLWTGWTSGSGAMVMIAVV). At 391–406 (TSLAMRLPNPRMVAID) the chain is on the cytoplasmic side. A helical transmembrane segment spans residues 407-427 (FIYGTLAALPLGLLYFLVIIP). The Periplasmic segment spans residues 428 to 430 (NTQ). A helical membrane pass occupies residues 431–451 (QSMLLLCISLAVLGFFLGIEV). Topologically, residues 452–458 (QKRRLGS) are cytoplasmic. A helical membrane pass occupies residues 459–479 (MGALASTINIIVLDNPMTFHF). The Periplasmic portion of the chain corresponds to 480–481 (SQ). A helical membrane pass occupies residues 482 to 502 (FLDSALGQIVGCVLAFTVILL). Topologically, residues 503–655 (VRDKSRDRTG…HKYQHALTDS (153 aa)) are cytoplasmic.

It belongs to the aromatic acid exporter ArAE (TC 2.A.85) family.

It is found in the cell inner membrane. Forms an efflux pump with AaeA. Could function as a metabolic relief valve, allowing to eliminate certain compounds when they accumulate to high levels in the cell. In Escherichia coli O157:H7, this protein is p-hydroxybenzoic acid efflux pump subunit AaeB.